The chain runs to 388 residues: uncharacterized protein (388 aa).

8 helical membrane passes run 15-37 (VISA…LLVL), 97-119 (GFSK…VVFY), 129-151 (PIWG…TFLL), 158-175 (FIYI…FLSA), 179-196 (MMLA…VLFK), 203-225 (LAFW…YLSQ), 304-326 (IFIV…YIYF), and 347-369 (LLSV…DALL).

It localises to the cell membrane. This is an uncharacterized protein from Aquifex aeolicus (strain VF5).